Here is a 158-residue protein sequence, read N- to C-terminus: Large ribosomal subunit protein uL11 (158 aa).

The protein belongs to the universal ribosomal protein uL11 family. Part of the ribosomal stalk of the 50S ribosomal subunit. Interacts with L10 and the large rRNA to form the base of the stalk. L10 forms an elongated spine to which L12 dimers bind in a sequential fashion forming a multimeric L10(L12)X complex.

Forms part of the ribosomal stalk which helps the ribosome interact with GTP-bound translation factors. The sequence is that of Large ribosomal subunit protein uL11 from Methanoregula boonei (strain DSM 21154 / JCM 14090 / 6A8).